Reading from the N-terminus, the 262-residue chain is MGKSKLDAVLKEKTQAKKPIFVPYIMAGDGGIDNLNKRIQFLEEAGASAVELGIPFSDPVADGPVIQDAGQRALANKTTIGSVLEALESEKSQRNIPVVLMTYINPVWKYGFEQFARDCSQAGVDGIIIPDIPMEEEDDVASSLTQHDIAFIRLAAMTSTEDRLERIAKRSEGFLYAVSVTGTTGERAQHENDAFHFLEKLKQISHVPVLAGFGISTAERARELSAACDGVVVGSKIVQLFEQGDEDGIHSLIRESIGEKVI.

Catalysis depends on proton acceptor residues E51 and D62.

This sequence belongs to the TrpA family. As to quaternary structure, tetramer of two alpha and two beta chains.

The enzyme catalyses (1S,2R)-1-C-(indol-3-yl)glycerol 3-phosphate + L-serine = D-glyceraldehyde 3-phosphate + L-tryptophan + H2O. The protein operates within amino-acid biosynthesis; L-tryptophan biosynthesis; L-tryptophan from chorismate: step 5/5. Functionally, the alpha subunit is responsible for the aldol cleavage of indoleglycerol phosphate to indole and glyceraldehyde 3-phosphate. The chain is Tryptophan synthase alpha chain from Oceanobacillus iheyensis (strain DSM 14371 / CIP 107618 / JCM 11309 / KCTC 3954 / HTE831).